The following is a 134-amino-acid chain: Waprin-Phi1 (134 aa).

A signal peptide spans methionine 1–alanine 23. 2 consecutive WAP domains span residues valine 36–isoleucine 82 and proline 83–arginine 133. 8 cysteine pairs are disulfide-bonded: cysteine 43/cysteine 72, cysteine 55/cysteine 76, cysteine 59/cysteine 71, cysteine 65/cysteine 80, cysteine 90/cysteine 120, cysteine 103/cysteine 124, cysteine 107/cysteine 119, and cysteine 113/cysteine 129.

Belongs to the venom waprin family. In terms of tissue distribution, expressed by the venom gland.

The protein resides in the secreted. Functionally, damages membranes of susceptible bacteria. Has no hemolytic activity. Not toxic to mice. Does not inhibit the proteinases elastase and cathepsin G. The protein is Waprin-Phi1 of Philodryas olfersii (Green snake).